The following is a 409-amino-acid chain: Histidine--tRNA ligase (409 aa).

The protein belongs to the class-II aminoacyl-tRNA synthetase family.

The protein localises to the cytoplasm. It carries out the reaction tRNA(His) + L-histidine + ATP = L-histidyl-tRNA(His) + AMP + diphosphate + H(+). The chain is Histidine--tRNA ligase (hisS) from Archaeoglobus fulgidus (strain ATCC 49558 / DSM 4304 / JCM 9628 / NBRC 100126 / VC-16).